The chain runs to 318 residues: MNQGVGPWQHTTVLLHEAVDALVHSPDGYYVDGTYGRGGHSRLILSKLSAAGRLLAIDRDPDAVAHATSGAARVTDPRFHIEHAPYSELPALLAARGVSRIDGLLLDIGVSSPQIDNPERGFSFRASGPLDMRMDPTRGESAADYLARADEREIAAVIRDYGEERFATAIARALVARRLAGRPVRTTEELAELVAQAVKTREPGQNPATRTFQALRIFVNAELTQLEQGLAAALQCLKPGGRLVVISFHSLEDRIVKTFIASHSKAVVDRRAPFAPPAPMRLRALARLKPGADEVAANPRARSAILRVAERTDVGIAA.

Residues Gly38–His40, Asp58, Tyr86, Asp107, and Gln114 contribute to the S-adenosyl-L-methionine site.

This sequence belongs to the methyltransferase superfamily. RsmH family.

The protein localises to the cytoplasm. It catalyses the reaction cytidine(1402) in 16S rRNA + S-adenosyl-L-methionine = N(4)-methylcytidine(1402) in 16S rRNA + S-adenosyl-L-homocysteine + H(+). Functionally, specifically methylates the N4 position of cytidine in position 1402 (C1402) of 16S rRNA. This Methylibium petroleiphilum (strain ATCC BAA-1232 / LMG 22953 / PM1) protein is Ribosomal RNA small subunit methyltransferase H.